A 556-amino-acid chain; its full sequence is Undecaprenyl phosphate-alpha-4-amino-4-deoxy-L-arabinose arabinosyl transferase (556 aa).

Transmembrane regions (helical) follow at residues 5–25, 88–108, 116–136, 179–199, 207–227, 258–278, 296–316, 319–339, 355–375, 384–404, and 410–430; these read MIKLKSTVILVLFALLYLLPL, FASVFSTALSALLVFWLALLL, LLAATIYLTSLLVYGIGTYSV, FMTKGFLALALPVISVLPVAL, LLLFGPLAIVVAVLLSAPWAL, APFWYYLPVLIVGTFPWLALL, FLLLCWMVMPLLFFSIAKGKL, YILPCFAPLALLMAAWISGLA, LAFGSVLALAVAALGLGIIMP, LTIVSGVVCFVGWVAFAAVSL, and WGYLVAGCPLFLALLVGGSIP.

This sequence belongs to the glycosyltransferase 83 family.

It localises to the cell inner membrane. It catalyses the reaction 4-amino-4-deoxy-alpha-L-arabinopyranosyl di-trans,octa-cis-undecaprenyl phosphate + lipid IVA = lipid IIA + di-trans,octa-cis-undecaprenyl phosphate.. The protein operates within lipopolysaccharide metabolism; 4-amino-4-deoxy-beta-L-arabinose-lipid A biosynthesis. In terms of biological role, catalyzes the transfer of the L-Ara4N moiety of the glycolipid undecaprenyl phosphate-alpha-L-Ara4N to lipid A. The modified arabinose is attached to lipid A and is required for resistance to polymyxin and cationic antimicrobial peptides. This Pectobacterium carotovorum subsp. carotovorum (strain PC1) protein is Undecaprenyl phosphate-alpha-4-amino-4-deoxy-L-arabinose arabinosyl transferase.